Reading from the N-terminus, the 256-residue chain is Gene 18 protein (256 aa).

The protein belongs to the herpesviridae UL79 family.

In Saimiriine herpesvirus 2 (strain 11) (SaHV-2), this protein is Gene 18 protein (18).